Here is a 609-residue protein sequence, read N- to C-terminus: MSEVHQESEVEYSRWKRERSPERSQRRSQSPPGEQSAYHRERSPLRKRGNYYDDRTRASGPYPTFTKPLIDPYTQTNAVSYERFIRWYSKENHISATTEDLYNSLHGTYNNYKQDLYARTARSFVESHCDEAWFEDSYWVDESQGRVLEVSENEKSYRRALYDKFMDRLDAGYYDDFQLPTAEDVIEKPSIPDNDTDDSILPSNDPQLSKWNQDSRNDAMENTLLVSHVLPNISVAQIHNALDGISFVQHFSLSTINLIKNDERSLWVHFKAGTNMDGAKEAVDGIQLDSNFTIESENPKIPTHTHPIPIFEIASSEQTCKNLLEKLIRFIDRASTKYSLPNDAAQRIEDRLKTHASMKDDDDKPTNFHDIRLSDLYAEYLRQVATFDFWTSKEYESLIALLQDSPAGYSRKKFNPSKEVGQEENIWLSDLENNFACLLEPENVDIKAKGALPVEDFINNELDSVIMKEDEQKYRCHVGTCAKLFLGPEFVRKHINKKHKDWLDHIKKVAICLYGYVLDPCRAMDPKVVSTSYVSLQILNKPYVGFRNINANYTFPTTSYSRRNDEEITSGASSQKSYSRQEPMIHRREFYRTYQDLDAPNQEVPELDY.

Residues 1–25 (MSEVHQESEVEYSRWKRERSPERSQ) show a composition bias toward basic and acidic residues. Disordered stretches follow at residues 1 to 60 (MSEV…RASG) and 187 to 210 (EKPSIPDNDTDDSILPSNDPQLSK). Positions 27-36 (RSQSPPGEQS) are enriched in low complexity. S28 and S30 each carry phosphoserine. The span at 37 to 57 (AYHRERSPLRKRGNYYDDRTR) shows a compositional bias: basic and acidic residues. Polar residues predominate over residues 201-210 (LPSNDPQLSK). The C2H2-type zinc finger occupies 474–499 (YRCHVGTCAKLFLGPEFVRKHINKKH).

Belongs to the ARS2 family. As to quaternary structure, interacts with ccr4.

It localises to the nucleus. The chain is NURS complex subunit pir2 from Schizosaccharomyces pombe (strain 972 / ATCC 24843) (Fission yeast).